The chain runs to 147 residues: D-aminoacyl-tRNA deacylase (147 aa).

Positions 136-137 (GP) match the Gly-cisPro motif, important for rejection of L-amino acids motif.

It belongs to the DTD family. As to quaternary structure, homodimer.

The protein localises to the cytoplasm. The enzyme catalyses glycyl-tRNA(Ala) + H2O = tRNA(Ala) + glycine + H(+). It carries out the reaction a D-aminoacyl-tRNA + H2O = a tRNA + a D-alpha-amino acid + H(+). Functionally, an aminoacyl-tRNA editing enzyme that deacylates mischarged D-aminoacyl-tRNAs. Also deacylates mischarged glycyl-tRNA(Ala), protecting cells against glycine mischarging by AlaRS. Acts via tRNA-based rather than protein-based catalysis; rejects L-amino acids rather than detecting D-amino acids in the active site. By recycling D-aminoacyl-tRNA to D-amino acids and free tRNA molecules, this enzyme counteracts the toxicity associated with the formation of D-aminoacyl-tRNA entities in vivo and helps enforce protein L-homochirality. This Persephonella marina (strain DSM 14350 / EX-H1) protein is D-aminoacyl-tRNA deacylase.